Here is a 364-residue protein sequence, read N- to C-terminus: tRNA 2-selenouridine synthase (364 aa).

Residues 14-137 (LIADTPIIDV…LRQTTIQATI (124 aa)) enclose the Rhodanese domain. Residue Cys-97 is the S-selanylcysteine intermediate of the active site.

Belongs to the SelU family. Monomer.

It carries out the reaction 5-methylaminomethyl-2-thiouridine(34) in tRNA + selenophosphate + (2E)-geranyl diphosphate + H2O + H(+) = 5-methylaminomethyl-2-selenouridine(34) in tRNA + (2E)-thiogeraniol + phosphate + diphosphate. The enzyme catalyses 5-methylaminomethyl-2-thiouridine(34) in tRNA + (2E)-geranyl diphosphate = 5-methylaminomethyl-S-(2E)-geranyl-thiouridine(34) in tRNA + diphosphate. The catalysed reaction is 5-methylaminomethyl-S-(2E)-geranyl-thiouridine(34) in tRNA + selenophosphate + H(+) = 5-methylaminomethyl-2-(Se-phospho)selenouridine(34) in tRNA + (2E)-thiogeraniol. It catalyses the reaction 5-methylaminomethyl-2-(Se-phospho)selenouridine(34) in tRNA + H2O = 5-methylaminomethyl-2-selenouridine(34) in tRNA + phosphate. Its function is as follows. Involved in the post-transcriptional modification of the uridine at the wobble position (U34) of tRNA(Lys), tRNA(Glu) and tRNA(Gln). Catalyzes the conversion of 2-thiouridine (S2U-RNA) to 2-selenouridine (Se2U-RNA). Acts in a two-step process involving geranylation of 2-thiouridine (S2U) to S-geranyl-2-thiouridine (geS2U) and subsequent selenation of the latter derivative to 2-selenouridine (Se2U) in the tRNA chain. The sequence is that of tRNA 2-selenouridine synthase from Escherichia coli O8 (strain IAI1).